Here is a 243-residue protein sequence, read N- to C-terminus: Nuclear ubiquitous casein and cyclin-dependent kinase substrate 1 (243 aa).

The disordered stretch occupies residues 1–243; the sequence is MSRPVRNRKV…SEDDAQSGED (243 aa). Position 13 is a phosphotyrosine (Tyr-13). Residues Ser-14 and Ser-19 each carry the phosphoserine modification. Residue Tyr-26 is modified to Phosphotyrosine. A compositionally biased stretch (basic residues) spans 35–51; the sequence is KKIRSSPREAKNKRRSG. Ser-54, Ser-58, Ser-61, Ser-73, Ser-75, and Ser-79 each carry phosphoserine. Over residues 64 to 77 the composition is skewed to basic and acidic residues; it reads KDVKTKKDDSHSAE. Positions 91–100 are enriched in low complexity; it reads QQRQAASKAA. A compositionally biased stretch (acidic residues) spans 111-124; the sequence is VGSEEEQEEEDEAP. Phosphoserine is present on residues Ser-113, Ser-130, Ser-132, and Ser-144. Residues 132–145 show a composition bias toward acidic residues; sequence SDEDFLVEDDDDSD. The span at 149 to 174 shows a compositional bias: basic residues; it reads SKKKNKKMVKKSKPERKEKKMPKPRL. Thr-179 carries the post-translational modification Phosphothreonine. Ser-181 bears the Phosphoserine mark. Positions 197 to 206 are enriched in basic and acidic residues; the sequence is ASKEKTPSPK. Thr-202 bears the Phosphothreonine mark. A phosphoserine mark is found at Ser-204, Ser-214, Ser-223, Ser-229, Ser-234, and Ser-240. Residues 232–243 show a composition bias toward acidic residues; that stretch reads EGSEDDAQSGED.

As to quaternary structure, does not interact with RAD51. In terms of processing, phosphorylated in an ATM-dependent manner in response to DNA damage. Phosphorylated by CDK1 and casein kinase.

It localises to the nucleus. It is found in the chromosome. In terms of biological role, chromatin-associated protein involved in DNA repair by promoting homologous recombination (HR). Binds double-stranded DNA (dsDNA) and secondary DNA structures, such as D-loop structures, but with less affinity than RAD51AP1. In Bos taurus (Bovine), this protein is Nuclear ubiquitous casein and cyclin-dependent kinase substrate 1 (NUCKS1).